The sequence spans 467 residues: Fumarate hydratase class II (467 aa).

Residues 98–100 (SGT), Arg-126, 129–132 (HPND), 139–141 (SSN), and Thr-187 each bind substrate. Catalysis depends on His-188, which acts as the Proton donor/acceptor. Ser-318 is a catalytic residue. Residues Ser-319 and 324-326 (KVN) each bind substrate.

Belongs to the class-II fumarase/aspartase family. Fumarase subfamily. As to quaternary structure, homotetramer.

The protein resides in the cytoplasm. The catalysed reaction is (S)-malate = fumarate + H2O. Its pathway is carbohydrate metabolism; tricarboxylic acid cycle; (S)-malate from fumarate: step 1/1. Involved in the TCA cycle. Catalyzes the stereospecific interconversion of fumarate to L-malate. The protein is Fumarate hydratase class II of Salmonella typhi.